The chain runs to 279 residues: Tryptophan synthase alpha chain (279 aa).

Residues Glu50 and Asp61 each act as proton acceptor in the active site.

This sequence belongs to the TrpA family. As to quaternary structure, tetramer of two alpha and two beta chains.

It catalyses the reaction (1S,2R)-1-C-(indol-3-yl)glycerol 3-phosphate + L-serine = D-glyceraldehyde 3-phosphate + L-tryptophan + H2O. The protein operates within amino-acid biosynthesis; L-tryptophan biosynthesis; L-tryptophan from chorismate: step 5/5. Functionally, the alpha subunit is responsible for the aldol cleavage of indoleglycerol phosphate to indole and glyceraldehyde 3-phosphate. This Sinorhizobium fredii (strain NBRC 101917 / NGR234) protein is Tryptophan synthase alpha chain.